Reading from the N-terminus, the 84-residue chain is uncharacterized protein (84 aa).

Its function is as follows. This protein may be involved in virus assembly. This is an uncharacterized protein from Saccharolobus solfataricus (Sulfolobus solfataricus).